We begin with the raw amino-acid sequence, 98 residues long: Integration host factor subunit alpha (98 aa).

Residues 49 to 71 (FGNFDLRDKNQRPGRNPKTGEDI) are disordered.

Belongs to the bacterial histone-like protein family. Heterodimer of an alpha and a beta chain.

Its function is as follows. This protein is one of the two subunits of integration host factor, a specific DNA-binding protein that functions in genetic recombination as well as in transcriptional and translational control. The chain is Integration host factor subunit alpha from Shewanella sp. (strain ANA-3).